A 167-amino-acid chain; its full sequence is Claudin domain-containing protein 2 (167 aa).

A run of 4 helical transmembrane segments spans residues 13-32, 61-81, 96-116, and 130-150; these read LLNL…NYWT, VSAA…GIGI, TIVL…VYTS, and YFFG…FLLA.

It belongs to the PMP-22/EMP/MP20 family.

It is found in the membrane. This chain is Claudin domain-containing protein 2 (Cldnd2), found in Mus musculus (Mouse).